A 554-amino-acid polypeptide reads, in one-letter code: DNA mismatch repair protein MutL (554 aa).

The protein belongs to the DNA mismatch repair MutL/HexB family.

Functionally, this protein is involved in the repair of mismatches in DNA. It is required for dam-dependent methyl-directed DNA mismatch repair. May act as a 'molecular matchmaker', a protein that promotes the formation of a stable complex between two or more DNA-binding proteins in an ATP-dependent manner without itself being part of a final effector complex. This Crocosphaera subtropica (strain ATCC 51142 / BH68) (Cyanothece sp. (strain ATCC 51142)) protein is DNA mismatch repair protein MutL.